The sequence spans 419 residues: Peroxisomal membrane protein PMP47B (419 aa).

Solcar repeat units lie at residues 6-120 (YDDL…TGKT), 142-230 (LSVW…LKSF), and 239-369 (VTPV…LLIL). A helical transmembrane segment spans residues 12 to 32 (AFAGAGGGLLSMTLTYPLVTL). The segment covering 44–53 (KNEEEEKENS) has biased composition (basic and acidic residues). The segment at 44 to 69 (KNEEEEKENSNEDGSLSPKSSNTSNI) is disordered. Positions 56–69 (DGSLSPKSSNTSNI) are enriched in polar residues. The next 3 membrane-spanning stretches (helical) occupy residues 98 to 118 (SALF…ELTG), 204 to 224 (FTGI…YTIF), and 245 to 265 (LLLG…YITL). A disordered region spans residues 274-305 (MTENNEDSEKERTDSVQSLPEDGSDEDNSKEN). 2 helical membrane-spanning segments follow: residues 310–330 (TINK…IIGY) and 349–369 (LLQS…LLIL).

Belongs to the mitochondrial carrier (TC 2.A.29) family.

It is found in the peroxisome membrane. In terms of biological role, may have transport activity. In Candida boidinii (Yeast), this protein is Peroxisomal membrane protein PMP47B (PMP47B).